We begin with the raw amino-acid sequence, 219 residues long: Large ribosomal subunit protein bL25 (219 aa).

Residues Ser194–Glu219 form a disordered region. The segment covering Val209–Glu219 has biased composition (polar residues).

It belongs to the bacterial ribosomal protein bL25 family. CTC subfamily. As to quaternary structure, part of the 50S ribosomal subunit; part of the 5S rRNA/L5/L18/L25 subcomplex. Contacts the 5S rRNA. Binds to the 5S rRNA independently of L5 and L18.

In terms of biological role, this is one of the proteins that binds to the 5S RNA in the ribosome where it forms part of the central protuberance. This is Large ribosomal subunit protein bL25 from Legionella pneumophila (strain Paris).